Consider the following 117-residue polypeptide: Prefoldin subunit beta (117 aa).

The protein belongs to the prefoldin subunit beta family. As to quaternary structure, heterohexamer of two alpha and four beta subunits.

Its subcellular location is the cytoplasm. Its function is as follows. Molecular chaperone capable of stabilizing a range of proteins. Seems to fulfill an ATP-independent, HSP70-like function in archaeal de novo protein folding. This Methanococcoides burtonii (strain DSM 6242 / NBRC 107633 / OCM 468 / ACE-M) protein is Prefoldin subunit beta.